A 236-amino-acid chain; its full sequence is Phosphoribosylaminoimidazole-succinocarboxamide synthase (236 aa).

The protein belongs to the SAICAR synthetase family.

The catalysed reaction is 5-amino-1-(5-phospho-D-ribosyl)imidazole-4-carboxylate + L-aspartate + ATP = (2S)-2-[5-amino-1-(5-phospho-beta-D-ribosyl)imidazole-4-carboxamido]succinate + ADP + phosphate + 2 H(+). It participates in purine metabolism; IMP biosynthesis via de novo pathway; 5-amino-1-(5-phospho-D-ribosyl)imidazole-4-carboxamide from 5-amino-1-(5-phospho-D-ribosyl)imidazole-4-carboxylate: step 1/2. The sequence is that of Phosphoribosylaminoimidazole-succinocarboxamide synthase from Pelodictyon phaeoclathratiforme (strain DSM 5477 / BU-1).